The primary structure comprises 895 residues: Probable aminodeoxychorismate synthase, chloroplastic (895 aa).

The segment at 1-45 (MAALRLPTPPPPRAPAPWLHSSHRRRVAAPRGAGGGGGGGGAVPP) is disordered. Residues 1–48 (MAALRLPTPPPPRAPAPWLHSSHRRRVAAPRGAGGGGGGGGAVPPPPV) constitute a chloroplast transit peptide. Gly residues predominate over residues 32–42 (GAGGGGGGGGA). The Glutamine amidotransferase type-1 domain maps to 49-307 (RTLLIDNYDS…KKITTDFGLQ (259 aa)). Cys135 (nucleophile) is an active-site residue. Active-site residues include His281 and Glu283. Residues 387–875 (IFSVLFGHHS…KAKAPTKVVE (489 aa)) are PABB component.

This sequence in the C-terminal section; belongs to the anthranilate synthase component I family.

The protein resides in the plastid. The protein localises to the chloroplast. It carries out the reaction chorismate + L-glutamine = 4-amino-4-deoxychorismate + L-glutamate. It functions in the pathway cofactor biosynthesis; tetrahydrofolate biosynthesis; 4-aminobenzoate from chorismate: step 1/2. It participates in antibiotic biosynthesis; candicidin biosynthesis. Its function is as follows. Bifunctional enzyme that catalyzes the biosynthesis of 4-amino-4-deoxychorismate (ADC) from chorismate and glutamine. In the first step, a glutamine amidotransferase generates ammonia that is channelled between the binding sites of glutamine and chorismate and used along with chorismate in the second step, catalyzed by aminodeoxychorismate synthase, to produce ADC. Required for the synthesis of 4-aminobenzoate (PABA), an important component in tetrahydrofolate biosynthesis. Does not possess ADC lyase activity. This chain is Probable aminodeoxychorismate synthase, chloroplastic (ADCS), found in Oryza sativa subsp. japonica (Rice).